Reading from the N-terminus, the 656-residue chain is Anion exchange transporter (656 aa).

The Cytoplasmic segment spans residues 1–75; it reads MTGAKRKKKS…LAFAVLSSVH (75 aa). Residues 76–96 form a helical membrane-spanning segment; the sequence is PVFGLYGSLFPAIIYAIFGMG. Over 97 to 144 the chain is Extracellular; sequence HHVATGTFALTSLISANAVERIVPQNMQNLTTQSNTSVLGLSDFEMQR. The helical transmembrane segment at 145–165 threads the bilayer; sequence IHVAAAVSFLGGVIQVAMFVL. Residue glutamine 166 is a topological domain, cytoplasmic. The helical transmembrane segment at 167–187 threads the bilayer; that stretch reads LGSATFVVTEPVISAMTTGAA. The Extracellular portion of the chain corresponds to 188–202; it reads THVVTSQVKYLLGMK. The helical transmembrane segment at 203 to 223 threads the bilayer; that stretch reads MPYISGPLGFFYIYAYVFENI. Over 224 to 227 the chain is Cytoplasmic; the sequence is KSVR. Residues 228–248 form a helical membrane-spanning segment; sequence LEALLLSLLSIVVLVLVKELN. At 249-254 the chain is on the extracellular side; the sequence is EQFKRK. A helical membrane pass occupies residues 255 to 275; it reads IKVVLPVDLVLIIAASFACYC. Residues 276 to 306 lie on the Cytoplasmic side of the membrane; sequence TNMENTYGLEVVGHIPQGIPSPRAPPMNILS. A helical membrane pass occupies residues 307 to 327; that stretch reads AVITEAFGVALVGYVASLALA. Residues 328 to 343 are Extracellular-facing; that stretch reads QGSAKKFKYSIDDNQE. Residues 344 to 364 traverse the membrane as a helical segment; it reads FLAHGLSNIVSSFFFCIPSAA. Over 365-383 the chain is Cytoplasmic; the sequence is AMGRTAGLYSTGAKTQVAC. 2 helical membrane passes run 384 to 404 and 405 to 425; these read LISC…LYWL and PMCV…IQFR. The Extracellular segment spans residues 426–448; it reads DLKKYWNVDKIDWGIWVSTYVFT. The helical transmembrane segment at 449–469 threads the bilayer; sequence ICFAANVGLLFGVVCTIAIVI. Residues 470–656 lie on the Cytoplasmic side of the membrane; sequence GRFPRAMTVS…LSKLSDHSEV (187 aa). An STAS domain is found at 492-641; the sequence is TEMDSETLQQ…ESVSAAISHI (150 aa). The tract at residues 641-656 is membrane targeting; it reads IHSNKNLSKLSDHSEV.

The protein belongs to the SLC26A/SulP transporter (TC 2.A.53) family. In terms of tissue distribution, expressed in the thyroid gland (at protein level). Expressed in tonsillar high endothelial venule endothelial cells (HEVEC), placenta and in testis, expressed in a subgroup of basal cells in the epididymal ducts.

It is found in the basolateral cell membrane. The protein resides in the recycling endosome membrane. It localises to the apical cell membrane. The protein localises to the lateral cell membrane. It catalyses the reaction chloride(in) = chloride(out). It carries out the reaction iodide(out) = iodide(in). The enzyme catalyses bromide(in) = bromide(out). The catalysed reaction is oxalate(in) = oxalate(out). It catalyses the reaction nitrate(in) = nitrate(out). It carries out the reaction sulfate(in) = sulfate(out). The enzyme catalyses thiocyanate(in) = thiocyanate(out). The catalysed reaction is D-gluconate(in) = D-gluconate(out). It catalyses the reaction hydrogencarbonate(in) = hydrogencarbonate(out). It carries out the reaction hydrogencarbonate(in) + chloride(out) = hydrogencarbonate(out) + chloride(in). Its activity is regulated as follows. Is active at both alkaline and acidic pH. Activity is inhibited by 4,4'-Di-isothiocyanatostilbene-2,2'-disulfonic acid (DIDS - an inhibitor of several anion channels and transporters). Its function is as follows. Acts as an anion channel mediating the transport of chloride, sulfate and oxalate ions. Mediates the transport of bromide, iodide, nitrate, gluconate, thiocyanate and bicarbonate ions. Its permeability towards bicarbonate is weak and increases when pH is above 7. Mediates thiocyanate transport in retinal pigment epithelium cells. Mediates iodide transport in the thyroid gland, playing an important role in the synthesis of thyroid hormones and the maintenance of thyroid function. Although it is an anion channel, according to PubMed:12736153 and PubMed:32119864 it has been shown to exhibit chloride-bicarbonate exchanger activity. This is Anion exchange transporter from Homo sapiens (Human).